A 126-amino-acid polypeptide reads, in one-letter code: Histone H2B type 1-B (126 aa).

The span at 1–12 shows a compositional bias: low complexity; it reads MPEPSKSAPAPK. Residues 1–35 are disordered; sequence MPEPSKSAPAPKKGSKKAITKAQKKDGKKRKRSRK. Pro-2 is subject to N-acetylproline. Glu-3 is modified (ADP-ribosyl glutamic acid). At Lys-6 the chain carries N6-(2-hydroxyisobutyryl)lysine; alternate. The residue at position 6 (Lys-6) is an N6-(beta-hydroxybutyryl)lysine; alternate. Residue Lys-6 is modified to N6-acetyllysine; alternate. Lys-6 carries the N6-butyryllysine; alternate modification. N6-crotonyllysine; alternate is present on Lys-6. Lys-6 carries the post-translational modification N6-lactoyllysine; alternate. A Glycyl lysine isopeptide (Lys-Gly) (interchain with G-Cter in SUMO2); alternate cross-link involves residue Lys-6. Ser-7 bears the ADP-ribosylserine mark. An N6-(beta-hydroxybutyryl)lysine; alternate modification is found at Lys-12. N6-acetyllysine; alternate is present on residues Lys-12 and Lys-13. Lys-12 and Lys-13 each carry N6-crotonyllysine; alternate. Lys-12 carries the N6-lactoyllysine; alternate modification. Lys-13 carries the N6-(2-hydroxyisobutyryl)lysine; alternate modification. Ser-15 is subject to Phosphoserine; by STK4/MST1. Lys-16, Lys-17, Lys-21, and Lys-24 each carry N6-acetyllysine; alternate. Residues Lys-16, Lys-17, Lys-21, and Lys-24 each carry the N6-crotonyllysine; alternate modification. 4 positions are modified to N6-lactoyllysine; alternate: Lys-16, Lys-17, Lys-21, and Lys-24. Residues Lys-17 and Lys-21 each carry the N6-(beta-hydroxybutyryl)lysine; alternate modification. The residue at position 17 (Lys-17) is an N6-glutaryllysine; alternate. Lys-21 and Lys-24 each carry N6-(2-hydroxyisobutyryl)lysine; alternate. Residue Lys-21 is modified to N6-butyryllysine; alternate. Lys-21 is covalently cross-linked (Glycyl lysine isopeptide (Lys-Gly) (interchain with G-Cter in SUMO2); alternate). Lys-25 carries the N6-(2-hydroxyisobutyryl)lysine modification. Position 35 is an N6-(2-hydroxyisobutyryl)lysine; alternate (Lys-35). Lys-35 carries the N6-(beta-hydroxybutyryl)lysine; alternate modification. Lys-35 carries the post-translational modification N6-crotonyllysine; alternate. Lys-35 carries the post-translational modification N6-glutaryllysine; alternate. Lys-35 carries the N6-succinyllysine; alternate modification. Lys-35 is covalently cross-linked (Glycyl lysine isopeptide (Lys-Gly) (interchain with G-Cter in ubiquitin); alternate). Glu-36 is modified (polyADP-ribosyl glutamic acid). Phosphoserine; by AMPK is present on Ser-37. An N6-(2-hydroxyisobutyryl)lysine; alternate mark is found at Lys-44, Lys-47, and Lys-58. Lys-44 is subject to N6-lactoyllysine; alternate. Lys-44 and Lys-47 each carry N6-glutaryllysine; alternate. N6-methyllysine; alternate is present on Lys-47. Lys-58 carries the N6,N6-dimethyllysine; alternate modification. Arg-80 is modified (dimethylated arginine). Lys-86 carries the post-translational modification N6-(2-hydroxyisobutyryl)lysine; alternate. Lys-86 carries the post-translational modification N6-(beta-hydroxybutyryl)lysine; alternate. An N6-acetyllysine; alternate modification is found at Lys-86. Lys-86 bears the N6-lactoyllysine; alternate mark. At Lys-86 the chain carries N6,N6,N6-trimethyllysine; alternate. Residues Arg-87 and Arg-93 each carry the omega-N-methylarginine modification. Lys-109 is modified (N6-(2-hydroxyisobutyryl)lysine; alternate). Residue Lys-109 is modified to N6-lactoyllysine; alternate. Lys-109 is modified (N6-glutaryllysine; alternate). Lys-109 is modified (N6-methyllysine; alternate). Residue Ser-113 is glycosylated (O-linked (GlcNAc) serine). Phosphothreonine is present on Thr-116. An N6-(2-hydroxyisobutyryl)lysine; alternate mark is found at Lys-117 and Lys-121. N6-(beta-hydroxybutyryl)lysine; alternate is present on residues Lys-117 and Lys-121. 2 positions are modified to N6-lactoyllysine; alternate: Lys-117 and Lys-121. An N6-glutaryllysine; alternate mark is found at Lys-117 and Lys-121. Residues Lys-117 and Lys-121 each carry the N6-succinyllysine; alternate modification. N6-malonyllysine; alternate is present on Lys-117. Residue Lys-117 is modified to N6-methylated lysine; alternate. Lys-121 participates in a covalent cross-link: Glycyl lysine isopeptide (Lys-Gly) (interchain with G-Cter in ubiquitin); alternate.

Belongs to the histone H2B family. In terms of assembly, the nucleosome is a histone octamer containing two molecules each of H2A, H2B, H3 and H4 assembled in one H3-H4 heterotetramer and two H2A-H2B heterodimers. The octamer wraps approximately 147 bp of DNA. In terms of processing, monoubiquitination at Lys-35 (H2BK34Ub) by the MSL1/MSL2 dimer is required for histone H3 'Lys-4' (H3K4me) and 'Lys-79' (H3K79me) methylation and transcription activation at specific gene loci, such as HOXA9 and MEIS1 loci. Similarly, monoubiquitination at Lys-121 (H2BK120Ub) by the RNF20/40 complex gives a specific tag for epigenetic transcriptional activation and is also prerequisite for histone H3 'Lys-4' and 'Lys-79' methylation. It also functions cooperatively with the FACT dimer to stimulate elongation by RNA polymerase II. H2BK120Ub also acts as a regulator of mRNA splicing: deubiquitination by USP49 is required for efficient cotranscriptional splicing of a large set of exons. Phosphorylation at Ser-37 (H2BS36ph) by AMPK in response to stress promotes transcription. Phosphorylated on Ser-15 (H2BS14ph) by STK4/MST1 during apoptosis; which facilitates apoptotic chromatin condensation. Also phosphorylated on Ser-15 in response to DNA double strand breaks (DSBs), and in correlation with somatic hypermutation and immunoglobulin class-switch recombination. Post-translationally, glcNAcylation at Ser-113 promotes monoubiquitination of Lys-121. It fluctuates in response to extracellular glucose, and associates with transcribed genes. In terms of processing, ADP-ribosylated by PARP1 or PARP2 on Ser-7 (H2BS6ADPr) in response to DNA damage. H2BS6ADPr promotes recruitment of CHD1L. Mono-ADP-ribosylated on Glu-3 (H2BE2ADPr) by PARP3 in response to single-strand breaks. Poly ADP-ribosylation on Glu-36 (H2BE35ADPr) by PARP1 regulates adipogenesis: it inhibits phosphorylation at Ser-37 (H2BS36ph), thereby blocking expression of pro-adipogenetic genes. Crotonylation (Kcr) is specifically present in male germ cells and marks testis-specific genes in post-meiotic cells, including X-linked genes that escape sex chromosome inactivation in haploid cells. Crotonylation marks active promoters and enhancers and confers resistance to transcriptional repressors. It is also associated with post-meiotically activated genes on autosomes. Post-translationally, lactylated in macrophages by EP300/P300 by using lactoyl-CoA directly derived from endogenous or exogenous lactate, leading to stimulates gene transcription.

Its subcellular location is the nucleus. The protein resides in the chromosome. Its function is as follows. Core component of nucleosome. Nucleosomes wrap and compact DNA into chromatin, limiting DNA accessibility to the cellular machineries which require DNA as a template. Histones thereby play a central role in transcription regulation, DNA repair, DNA replication and chromosomal stability. DNA accessibility is regulated via a complex set of post-translational modifications of histones, also called histone code, and nucleosome remodeling. The polypeptide is Histone H2B type 1-B (Homo sapiens (Human)).